Here is a 742-residue protein sequence, read N- to C-terminus: Synaptic vesicle glycoprotein 2A (742 aa).

The tract at residues 1-57 (MEEGFRDRAAFIRGAKDIAKEVKKHAAKKVVKGLDRVQDEYSRRSYSRFEEEDDDDD) is interaction with SYT1. Residues 1-169 (MEEGFRDRAA…GHGRFQWTLY (169 aa)) lie on the Cytoplasmic side of the membrane. The segment covering 33 to 49 (GLDRVQDEYSRRSYSRF) has biased composition (basic and acidic residues). Residues 33-144 (GLDRVQDEYS…GRGEAQRRKE (112 aa)) are disordered. 2 positions are modified to phosphoserine: serine 80 and serine 81. At threonine 84 the chain carries Phosphothreonine. The span at 122–137 (VRGGLSDGEGPPGGRG) shows a compositional bias: gly residues. Serine 127 carries the phosphoserine modification. The chain crosses the membrane as a helical span at residues 170–190 (FVLGLALMADGVEVFVVGFVL). At 191–205 (PSAEKDMCLSDSNKG) the chain is on the extracellular side. A helical transmembrane segment spans residues 206-226 (MLGLIVYLGMMVGAFLWGGLA). At 227–233 (DRLGRRQ) the chain is on the cytoplasmic side. A helical membrane pass occupies residues 234-254 (CLLISLSVNSVFAFFSSFVQG). The Extracellular segment spans residues 255–262 (YGTFLFCR). A helical membrane pass occupies residues 263 to 283 (LLSGVGIGGSIPIVFSYFSEF). Over 284–294 (LAQEKRGEHLS) the chain is Cytoplasmic. Residues 295–315 (WLCMFWMIGGVYAAAMAWAII) traverse the membrane as a helical segment. Topologically, residues 316-334 (PHYGWSFQMGSAYQFHSWR) are extracellular. The helical transmembrane segment at 335–355 (VFVLVCAFPSVFAIGALTTQP) threads the bilayer. At 356-447 (ESPRFFLENG…CFGPEYRRIT (92 aa)) the chain is on the cytoplasmic side. Serine 393 carries the post-translational modification Phosphoserine. The chain crosses the membrane as a helical span at residues 448–468 (LMMMGVWFTMSFSYYGLTVWF). Topologically, residues 469-598 (PDMIRHLQAV…GTGEGAYMVY (130 aa)) are extracellular. A Phosphotyrosine modification is found at tyrosine 480. N-linked (GlcNAc...) asparagine glycans are attached at residues asparagine 498, asparagine 548, and asparagine 573. A helical membrane pass occupies residues 599–619 (FVSFLGTLAVLPGNIVSALLM). At 620 to 626 (DKIGRLR) the chain is on the cytoplasmic side. A helical membrane pass occupies residues 627-647 (MLAGSSVMSCVSCFFLSFGNS). Residues 648-651 (ESAM) lie on the Extracellular side of the membrane. Residues 652-672 (IALLCLFGGVSIASWNALDVL) form a helical membrane-spanning segment. Topologically, residues 673–685 (TVELYPSDKRTTA) are cytoplasmic. Residues 686-708 (FGFLNALCKLAAVLGISIFTSFV) form a helical membrane-spanning segment. Over 709–712 (GITK) the chain is Extracellular. Residues 713–731 (AAPILFASAALALGSSLAL) form a helical membrane-spanning segment. Residues 732-742 (KLPETRGQVLQ) are Cytoplasmic-facing.

The protein belongs to the major facilitator superfamily. In terms of assembly, interacts with SYT1/synaptotagmin-1 in a calcium-dependent manner. Binds the adapter protein complex AP-2. (Microbial infection) Interacts with C.botulinum neurotoxin type A2 (BoNT/A, botA). Interaction is improved by glycosylation of SV2. In terms of processing, phosphorylation by CK1 of the N-terminal cytoplasmic domain regulates interaction with SYT1. Post-translationally, N-glycosylated.

It localises to the presynapse. The protein localises to the cytoplasmic vesicle. It is found in the secretory vesicle. The protein resides in the synaptic vesicle membrane. Functionally, plays a role in the control of regulated secretion in neural and endocrine cells, enhancing selectively low-frequency neurotransmission. Positively regulates vesicle fusion by maintaining the readily releasable pool of secretory vesicles. In terms of biological role, (Microbial infection) Receptor for the C.botulinum neurotoxin type A2 (BoNT/A, botA); glycosylation is not essential but enhances the interaction. Probably also serves as a receptor for the closely related C.botulinum neurotoxin type A1. The chain is Synaptic vesicle glycoprotein 2A (SV2A) from Homo sapiens (Human).